Reading from the N-terminus, the 194-residue chain is MINIEIIDFRNFAYGKQKKVDDEIYGGGSGMLLKIEPIDLALENTKGKRILLSPQGKPFTQDDALKLSKEENLTFICGRYEGFDERIRNLIDEEYSIGDYVLTGGELASMVIADSTIRLIPGVIKEESYKNDSFQNNLLDYPQYTRPATYKNMNVPEVLLNGNHKEIKQWREQKAYEKTLKNRPDLIERKNNAK.

Residues G78 and 97 to 102 each bind S-adenosyl-L-methionine; that span reads IGDYVL.

It belongs to the RNA methyltransferase TrmD family. As to quaternary structure, homodimer.

It localises to the cytoplasm. It carries out the reaction guanosine(37) in tRNA + S-adenosyl-L-methionine = N(1)-methylguanosine(37) in tRNA + S-adenosyl-L-homocysteine + H(+). In terms of biological role, specifically methylates guanosine-37 in various tRNAs. The chain is tRNA (guanine-N(1)-)-methyltransferase from Mycoplasma mobile (strain ATCC 43663 / 163K / NCTC 11711) (Mesomycoplasma mobile).